The primary structure comprises 266 residues: Uridylate kinase (266 aa).

Position 26–29 (26–29 (KLGG)) interacts with ATP. Position 67 (Gly67) interacts with UMP. ATP-binding residues include Gly68 and Arg72. Residues Asp87 and 148 to 155 (LGAPYFST) contribute to the UMP site. ATP-binding residues include Tyr181 and Asp184.

The protein belongs to the UMP kinase family. As to quaternary structure, homohexamer.

The protein localises to the cytoplasm. It catalyses the reaction UMP + ATP = UDP + ADP. The protein operates within pyrimidine metabolism; CTP biosynthesis via de novo pathway; UDP from UMP (UMPK route): step 1/1. With respect to regulation, inhibited by UTP. Functionally, catalyzes the reversible phosphorylation of UMP to UDP. This Acidothermus cellulolyticus (strain ATCC 43068 / DSM 8971 / 11B) protein is Uridylate kinase.